Consider the following 161-residue polypeptide: Transcription antitermination protein NusB (161 aa).

It belongs to the NusB family.

In terms of biological role, involved in transcription antitermination. Required for transcription of ribosomal RNA (rRNA) genes. Binds specifically to the boxA antiterminator sequence of the ribosomal RNA (rrn) operons. The polypeptide is Transcription antitermination protein NusB (Syntrophus aciditrophicus (strain SB)).